Consider the following 798-residue polypeptide: Integrin beta-1 (798 aa).

An N-terminal signal peptide occupies residues 1–20 (MNLQPIFWIGLISSICCVFA). The 51-residue stretch at 26–76 (RCLKANAKSCGECIQAGPNCGWCTNSTFLQEGMPTSARCDDLEALKKKGCP) folds into the PSI domain. Intrachain disulfides connect Cys27/Cys45, Cys35/Cys464, Cys38/Cys64, Cys48/Cys75, Cys207/Cys213, Cys261/Cys301, Cys401/Cys415, Cys435/Cys462, Cys466/Cys486, Cys477/Cys489, Cys491/Cys500, Cys502/Cys533, Cys516/Cys531, Cys525/Cys536, Cys538/Cys553, Cys555/Cys576, Cys560/Cys574, Cys568/Cys579, Cys581/Cys590, Cys592/Cys615, Cys599/Cys613, Cys607/Cys618, Cys620/Cys630, Cys633/Cys636, Cys640/Cys691, Cys646/Cys665, Cys649/Cys661, and Cys699/Cys723. Asn50 is a glycosylation site (N-linked (GlcNAc...) asparagine). The segment at 75-107 (CPPDDIENPRGSKDIKKNKNVTNRSKGTAEKLK) is disordered. Over residues 81–91 (ENPRGSKDIKK) the composition is skewed to basic and acidic residues. N-linked (GlcNAc...) asparagine glycans are attached at residues Asn94 and Asn97. The VWFA domain occupies 140 to 378 (DYPIDLYYLM…QLIIDAYNSL (239 aa)). Mg(2+) is bound by residues Ser152 and Ser154. Ca(2+) contacts are provided by Ser154, Asp157, Asp158, and Glu189. A CX3CL1-binding region spans residues 207-213 (CTSEQNC). A glycan (N-linked (GlcNAc...) asparagine) is linked at Asn212. Residues Asn244, Asp246, Pro248, and Glu249 each contribute to the Ca(2+) site. Glu249 provides a ligand contact to Mg(2+). N-linked (GlcNAc...) asparagine glycosylation occurs at Asn269. The tract at residues 295 to 314 (LPNDGQCHLENNMYTMSHYY) is CX3CL1-binding. Residue Ala362 coordinates Ca(2+). Asn363, Asn406, and Asn417 each carry an N-linked (GlcNAc...) asparagine glycan. The interval 383–465 (ILENSKLSEG…VILQYICECE (83 aa)) is interaction with TMEM182. I-EGF domains are found at residues 466-501 (CQSEGIPESPKCHEGNGTFECGACRCNEGRVGRHCE), 502-554 (CSTD…KFCE), 555-591 (CDNFNCDRSNGLICGGNGVCKCRVCECNPNYTGSACD), and 592-631 (CSLDTSTCEASNGQICNGRGICECGVCKCTDPKFQGQTCE). Residue Asn481 is glycosylated (N-linked (GlcNAc...) asparagine). A glycan (N-linked (GlcNAc...) asparagine) is linked at Asn520. N-linked (GlcNAc...) asparagine glycosylation is present at Asn584. An N-linked (GlcNAc...) asparagine glycan is attached at Asn669. A helical membrane pass occupies residues 729-749 (IIPIVAGVVAGIVLIGLALLL). Residues 762–767 (EFAKFE) form a signal for sorting from recycling endosomes; interaction with ACAP1 region. At Thr777 the chain carries Phosphothreonine. Tyr783 is subject to Phosphotyrosine. Ser785 bears the Phosphoserine mark. The interaction with ITGB1BP1 stretch occupies residues 785–792 (SAVTTVVN). Thr789 is subject to Phosphothreonine. Position 794 is an N6-acetyllysine; alternate (Lys794). Lys794 is covalently cross-linked (Glycyl lysine isopeptide (Lys-Gly) (interchain with G-Cter in SUMO1); alternate).

This sequence belongs to the integrin beta chain family. In terms of assembly, interacts with seprase FAP (seprase); the interaction occurs at the cell surface of invadopodia membrane in a collagen-dependent manner. Heterodimer of an alpha and a beta subunit. Beta-1 associates with either alpha-1, alpha-2, alpha-3, alpha-4, alpha-5, alpha-6, alpha-7, alpha-8, alpha-9, alpha-10, alpha-11 or alpha-V. ITGA6:ITGB1 is found in a complex with CD9; interaction takes place in oocytes and is involved in sperm-egg fusion. Binds LGALS3BP and NMRK2, when associated with alpha-7, but not with alpha-5. Interacts with FLNA, FLNB, FLNC and RANBP9. Interacts with KRT1 in the presence of RACK1 and SRC. Interacts with JAML; integrin alpha-4/beta-1 may regulate leukocyte to endothelial cells adhesion by controlling JAML homodimerization. Interacts with RAB21. Interacts (via the cytoplasmic region) with RAB25 (via the hypervariable C-terminal region). Interacts with MYO10. Interacts with ITGB1BP1 (via C-terminal region); the interaction is a prerequisite for focal adhesion disassembly. Interacts with TLN1; the interaction is prevented by competitive binding of ITGB1BP1. Interacts with ACAP1; required for ITGB1 recycling. Interacts with ASAP3. Interacts with FERMT2; the interaction is inhibited in presence of ITGB1BP1. Interacts with DAB2. Interacts with FGR and HCK. Interacts with alpha-7A and alpha-7B in adult skeletal muscle. Interacts with alpha-7B in cardiomyocytes of adult heart. Interacts with EMP2; the interaction may be direct or indirect and ITGB1 has a heterodimer form. ITGA5:ITGB1 interacts with CCN3. ITGA4:ITGB1 is found in a ternary complex with CX3CR1 and CX3CL1. ITGA5:ITGB1 interacts with FBN1. ITGA5:ITGB1 acts as a receptor for fibronectin FN1 and mediates R-G-D-dependent cell adhesion to FN1. ITGA5:ITGB1 interacts with IL1B. Interacts with MDK. ITGA4:ITGB1 interacts with MDK; this interaction mediates MDK-induced osteoblast cells migration through PXN phosphorylation. ITGA6:ITGB1 interacts with MDK; this interaction mediates MDK-induced neurite-outgrowth. ITGA5:ITGB1 interacts with ACE2. Interacts with TMEM182 and LAMB1. Interacts with tensin TNS3; TNS3 also interacts with PEAK1, thus acting as an adapter molecule to bridge the association of PEAK1 with ITGB1. Interacts with tensin TNS4; the interaction displaces tensin TNS3 from the ITGB1 cytoplasmic tail and promotes ITGB1 stability. Integrin ITGA9:ITGB1 interacts with SPP1/OPN (via N-terminus). Integrin ITGA9:ITGB1 interacts with TNC/TNFN3 (via the 3rd Fibronectin type-III domain). Integrins ITGA4:ITGB1 and ITGA9:ITGB1 interact with SVEP1 (via Sushi domain 21); thereby inhibit Ca(2+) intracellular signaling and as a result repress vasocontraction. ITGA4:ITGB1 and ITGA5:ITGB1 interacts with SELP. Interacts with CD248. ITGA5:ITGB1 interacts with IGFBP1. ITGA4:ITGB1 interacts with BCAM. Interacts with ADGRG6.

The protein resides in the cell membrane. Its subcellular location is the cell projection. The protein localises to the invadopodium membrane. It is found in the ruffle membrane. It localises to the recycling endosome. The protein resides in the melanosome. Its subcellular location is the lamellipodium. The protein localises to the ruffle. It is found in the cell junction. It localises to the focal adhesion. In terms of biological role, integrins alpha-1/beta-1, alpha-2/beta-1, alpha-10/beta-1 and alpha-11/beta-1 are receptors for collagen. Integrins alpha-1/beta-1 and alpha-2/beta-2 recognize the proline-hydroxylated sequence G-F-P-G-E-R in collagen. Integrins alpha-2/beta-1, alpha-3/beta-1, alpha-4/beta-1, alpha-5/beta-1, alpha-8/beta-1, alpha-10/beta-1, alpha-11/beta-1 and alpha-V/beta-1 are receptors for fibronectin. Alpha-4/beta-1 recognizes one or more domains within the alternatively spliced CS-1 and CS-5 regions of fibronectin. Integrin alpha-5/beta-1 is a receptor for fibrinogen. Integrin alpha-1/beta-1, alpha-2/beta-1, alpha-6/beta-1 and alpha-7/beta-1 are receptors for lamimin. Integrin alpha-6/beta-1 (ITGA6:ITGB1) is present in oocytes and is involved in sperm-egg fusion. Integrin alpha-4/beta-1 is a receptor for VCAM1 and recognizes the sequence Q-I-D-S in VCAM1. Integrin alpha-9/beta-1 is a receptor for VCAM1, cytotactin and osteopontin. It recognizes the sequence A-E-I-D-G-I-E-L in cytotactin. Integrin alpha-3/beta-1 is a receptor for epiligrin, thrombospondin and CSPG4. Integrin alpha-3/beta-1 provides a docking site for FAP (seprase) at invadopodia plasma membranes in a collagen-dependent manner and hence may participate in the adhesion, formation of invadopodia and matrix degradation processes, promoting cell invasion. Alpha-3/beta-1 may mediate with LGALS3 the stimulation by CSPG4 of endothelial cells migration. Integrin alpha-V/beta-1 is a receptor for vitronectin. Beta-1 integrins recognize the sequence R-G-D in a wide array of ligands. When associated with alpha-7/beta-1 integrin, regulates cell adhesion and laminin matrix deposition. Involved in promoting endothelial cell motility and angiogenesis. Involved in osteoblast compaction through the fibronectin fibrillogenesis cell-mediated matrix assembly process and the formation of mineralized bone nodules. May be involved in up-regulation of the activity of kinases such as PKC via binding to KRT1. Together with KRT1 and RACK1, serves as a platform for SRC activation or inactivation. Plays a mechanistic adhesive role during telophase, required for the successful completion of cytokinesis. ITGA4:ITGB1 binds to fractalkine (CX3CL1) and may act as its coreceptor in CX3CR1-dependent fractalkine signaling. ITGA4:ITGB1 and ITGA5:ITGB1 bind to PLA2G2A via a site (site 2) which is distinct from the classical ligand-binding site (site 1) and this induces integrin conformational changes and enhanced ligand binding to site 1. ITGA5:ITGB1 acts as a receptor for fibrillin-1 (FBN1) and mediates R-G-D-dependent cell adhesion to FBN1. ITGA5:ITGB1 is a receptor for IL1B and binding is essential for IL1B signaling. ITGA5:ITGB3 is a receptor for soluble CD40LG and is required for CD40/CD40LG signaling. Plays an important role in myoblast differentiation and fusion during skeletal myogenesis. ITGA9:ITGB1 may play a crucial role in SVEP1/polydom-mediated myoblast cell adhesion. Integrins ITGA9:ITGB1 and ITGA4:ITGB1 repress PRKCA-mediated L-type voltage-gated channel Ca(2+) influx and ROCK-mediated calcium sensitivity in vascular smooth muscle cells via their interaction with SVEP1, thereby inhibit vasocontraction. This Pongo abelii (Sumatran orangutan) protein is Integrin beta-1 (ITGB1).